Here is a 247-residue protein sequence, read N- to C-terminus: MAEEEAKGLDYIPEIVLKKRKNRDELAFIRKKQLELGNSGKKKKKVSDIKRPEDFVHEFRAKEVDMIRMKQRVKRPKSSPPPVKSDLVFIIRIQGKNDMHPKTKRILNNLQLKSVFTGVFAKATDSLFQKLLKVQPYVTYGYPNDKSVKDLIYKKGCTIIEGNPVPLTDNNIIEQALGEHKILGIEDLVNEIARVGDHFREVMRFLGPLKLNKPVADVLHRKKQVFSEGGDTGNREDKINDLISKMN.

The protein belongs to the universal ribosomal protein uL30 family.

This Arabidopsis thaliana (Mouse-ear cress) protein is Large ribosomal subunit protein uL30z (RPL7A).